The following is a 109-amino-acid chain: Guanylin (109 aa).

The signal sequence occupies residues 1 to 21; it reads MNTFLFPTLCLLGVWAALAGG. The propeptide occupies 22-94; it reads VTVKDGEFSF…LERLETIAQD (73 aa). Intrachain disulfides connect C63–C76, C98–C106, and C101–C109.

This sequence belongs to the guanylin family.

It is found in the secreted. Its function is as follows. Endogenous activator of intestinal guanylate cyclase. It stimulates this enzyme through the same receptor binding region as the heat-stable enterotoxins. In Sus scrofa (Pig), this protein is Guanylin (GUCA2A).